The primary structure comprises 610 residues: UvrABC system protein C (610 aa).

One can recognise a GIY-YIG domain in the interval 13–92 (TLPGVYLMKN…IKQHKPRYNA (80 aa)). A UVR domain is found at 204-239 (KDVLKDLYEEMRLLSEQLEFEKANHLLRTIRYIEKT).

Belongs to the UvrC family. As to quaternary structure, interacts with UvrB in an incision complex.

The protein localises to the cytoplasm. Functionally, the UvrABC repair system catalyzes the recognition and processing of DNA lesions. UvrC both incises the 5' and 3' sides of the lesion. The N-terminal half is responsible for the 3' incision and the C-terminal half is responsible for the 5' incision. This chain is UvrABC system protein C, found in Protochlamydia amoebophila (strain UWE25).